Consider the following 97-residue polypeptide: UPF0235 protein APP7_1431 (97 aa).

It belongs to the UPF0235 family.

The protein is UPF0235 protein APP7_1431 of Actinobacillus pleuropneumoniae serotype 7 (strain AP76).